The chain runs to 203 residues: Thymidylate kinase (203 aa).

14–21 is a binding site for ATP; that stretch reads GMDGIGKS.

This sequence belongs to the thymidylate kinase family.

The enzyme catalyses dTMP + ATP = dTDP + ADP. Phosphorylation of dTMP to form dTDP in both de novo and salvage pathways of dTTP synthesis. The polypeptide is Thymidylate kinase (Rickettsia typhi (strain ATCC VR-144 / Wilmington)).